The chain runs to 942 residues: Protein FAM184B (942 aa).

2 disordered regions span residues 1-26 and 73-97; these read MASA…RGGS and QEDL…TSED. 3 coiled-coil regions span residues 89 to 150, 196 to 337, and 387 to 495; these read QEQS…RVLI, EMHQ…DRLM, and SETQ…SLLE. The disordered stretch occupies residues 486–542; the sequence is STKLQNSLLEDPCSRPKKPARDEGLEKLTDEEESSSDEEERTGESVKGKSDLQPPFE. The span at 504–513 shows a compositional bias: basic and acidic residues; it reads PARDEGLEKL. Positions 514–526 are enriched in acidic residues; that stretch reads TDEEESSSDEEER. Coiled-coil stretches lie at residues 575–619 and 686–815; these read NKDS…ESLR and EKGL…ERRF. Positions 880–934 are disordered; sequence APPITKSPSLDPSPSCSQPYKPTQLLDGKTASRTQDGEPAQPKEAPQKQGSPHQE. Positions 885–900 are enriched in polar residues; that stretch reads KSPSLDPSPSCSQPYK.

It belongs to the FAM184 family.

The protein is Protein FAM184B (Fam184b) of Mus musculus (Mouse).